The following is a 137-amino-acid chain: Large ribosomal subunit protein uL16 (137 aa).

Belongs to the universal ribosomal protein uL16 family. In terms of assembly, part of the 50S ribosomal subunit.

Binds 23S rRNA and is also seen to make contacts with the A and possibly P site tRNAs. The sequence is that of Large ribosomal subunit protein uL16 from Afipia carboxidovorans (strain ATCC 49405 / DSM 1227 / KCTC 32145 / OM5) (Oligotropha carboxidovorans).